Consider the following 1229-residue polypeptide: Nuclear envelope pore membrane protein POM 121C (1229 aa).

Residues 1-10 (MSPAAAAAGA) are compositionally biased toward low complexity. The disordered stretch occupies residues 1–24 (MSPAAAAAGAGERRRPIASVRDGR). A cisternal side region spans residues 1 to 40 (MSPAAAAAGAGERRRPIASVRDGRGRGCGGPAGAALLGLS). The tract at residues 1 to 398 (MSPAAAAAGA…AITSSYSSTR (398 aa)) is required for targeting to the nucleus and nuclear pore complex. Basic and acidic residues predominate over residues 11 to 24 (GERRRPIASVRDGR). The helical transmembrane segment at 41–61 (LVGLLLYLVPAAAALAWLAVG) threads the bilayer. A pore side region spans residues 62–1229 (TTAAWWGLSR…QARRQHTRKK (1168 aa)). A Phosphoserine modification is found at Ser81. 5 disordered regions span residues 90 to 200 (RTLF…LPDR), 296 to 507 (KKKK…LGYS), 579 to 747 (KKMQ…TAPT), 936 to 966 (PLPS…ALTP), and 1202 to 1229 (PSFS…TRKK). Residues 155–166 (ARPAPRSTPPSQ) show a composition bias toward pro residues. Residues 176-189 (PSLPTPLLRPSGRP) show a composition bias toward low complexity. Phosphoserine is present on residues Ser322, Ser328, Ser348, Ser370, and Ser373. Polar residues predominate over residues 374-400 (LTGAYTSGIPSSSRNAITSSYSSTRGI). Positions 409-422 (PSSSPFSSPASSRS) are enriched in low complexity. Basic and acidic residues-rich tracts occupy residues 427-439 (RPAK…ELCH) and 449-463 (ADKE…DTTP). Positions 468-479 (NSNSQSTPGSSG) are enriched in polar residues. Over residues 612-629 (PPLGLSQSGPPGLLPSPS) the composition is skewed to low complexity. Residues 660–673 (QAETATKPQATSAP) are compositionally biased toward polar residues. Low complexity-rich tracts occupy residues 689–703 (SPSS…SASP) and 726–747 (SVSA…TAPT). The segment covering 1219–1229 (LQARRQHTRKK) has biased composition (basic residues).

The protein belongs to the POM121 family.

It localises to the nucleus. The protein localises to the nuclear pore complex. The protein resides in the nucleus membrane. Its subcellular location is the endoplasmic reticulum membrane. In terms of biological role, essential component of the nuclear pore complex (NPC). The repeat-containing domain may be involved in anchoring components of the pore complex to the pore membrane. When overexpressed in cells induces the formation of cytoplasmic annulate lamellae (AL). In Homo sapiens (Human), this protein is Nuclear envelope pore membrane protein POM 121C (POM121C).